Reading from the N-terminus, the 365-residue chain is MNKVALYCRPGFEKECAAEITDKAGQIGVYGFSRVKEGSGYVIFECYQEGDADKIARDVDFRGLIFARQLFVCGELLKNLPPEDRITPIIDQLKGSTEKAGELRVEVADTNESKELLKFCRKFTVPLRNQLRKEKILLKVENYSRPVIHVFFIAPGCCYVGYSYSFNNSPFYMGIPRLKFPADAPSRSTLKLEEAFHVFIPYEEWEERLASGMSAVDLGACPGGWTYQLVKRSMMVHAVDNGPMAPSLMETGQVRHHQADGFKFEPTSKNITWLVCDMVEKPAKVAALMTTWIVNEWCREAIFNLKLPMKKRYEEVAHILDKIRAELAEKGINAKIQAKHLYHDREEITVHIQNIWAAYRPDREF.

S-adenosyl-L-methionine contacts are provided by residues serine 188, 221-224 (CPGG), aspartate 240, aspartate 260, and aspartate 277. Lysine 306 functions as the Proton acceptor in the catalytic mechanism.

This sequence belongs to the class I-like SAM-binding methyltransferase superfamily. RNA methyltransferase RlmE family. RlmM subfamily. As to quaternary structure, monomer.

Its subcellular location is the cytoplasm. The enzyme catalyses cytidine(2498) in 23S rRNA + S-adenosyl-L-methionine = 2'-O-methylcytidine(2498) in 23S rRNA + S-adenosyl-L-homocysteine + H(+). Functionally, catalyzes the 2'-O-methylation at nucleotide C2498 in 23S rRNA. This is Ribosomal RNA large subunit methyltransferase M from Proteus mirabilis (strain HI4320).